We begin with the raw amino-acid sequence, 120 residues long: Chaperonin GroEL (120 aa).

23 to 27 (DGTTT) lines the ATP pocket.

It belongs to the chaperonin (HSP60) family. In terms of assembly, forms a cylinder of 14 subunits composed of two heptameric rings stacked back-to-back. Interacts with the co-chaperonin GroES.

It localises to the cytoplasm. The enzyme catalyses ATP + H2O + a folded polypeptide = ADP + phosphate + an unfolded polypeptide.. Its function is as follows. Together with its co-chaperonin GroES, plays an essential role in assisting protein folding. The GroEL-GroES system forms a nano-cage that allows encapsulation of the non-native substrate proteins and provides a physical environment optimized to promote and accelerate protein folding. The polypeptide is Chaperonin GroEL (Mycobacterium gordonae).